We begin with the raw amino-acid sequence, 72 residues long: Dermaseptin-A4 (72 aa).

The signal sequence occupies residues 1-22 (MAFLKKSLFLVLFLGMVSLSIC). Positions 23-41 (EEEKREEENEQEDDEQSEE) are excised as a propeptide. The disordered stretch occupies residues 24 to 43 (EEKREEENEQEDDEQSEEKR). Acidic residues predominate over residues 30-39 (ENEQEDDEQS). Position 69 is an alanine amide (Ala-69). A propeptide spanning residues 71–72 (EQ) is cleaved from the precursor.

It belongs to the frog skin active peptide (FSAP) family. Dermaseptin subfamily. In terms of tissue distribution, expressed by the skin glands.

The protein resides in the secreted. Possesses a potent antimicrobial activity against Gram-positive and Gram-negative bacteria. Probably acts by disturbing membrane functions with its amphipathic structure. This is Dermaseptin-A4 from Agalychnis annae (Blue-sided leaf frog).